A 634-amino-acid polypeptide reads, in one-letter code: BTB/POZ domain-containing protein At1g03010 (634 aa).

The BTB domain occupies 38–103; the sequence is SDLTVQVGSS…CYGINIEINL (66 aa). One can recognise an NPH3 domain in the interval 205–503; that stretch reads DWWGKSLAVL…VQVLYFEQIR (299 aa). At Y444 the chain carries Phosphotyrosine. The stretch at 542–580 forms a coiled coil; that stretch reads RDNYASVRRENRELKLEVARMRMRLTDLEKDHISIKQEL.

Belongs to the NPH3 family.

The protein operates within protein modification; protein ubiquitination. Functionally, may act as a substrate-specific adapter of an E3 ubiquitin-protein ligase complex (CUL3-RBX1-BTB) which mediates the ubiquitination and subsequent proteasomal degradation of target proteins. The protein is BTB/POZ domain-containing protein At1g03010 of Arabidopsis thaliana (Mouse-ear cress).